A 248-amino-acid chain; its full sequence is Ribosomal RNA small subunit methyltransferase G (248 aa).

Residues Gly-85, Phe-90, 137–138 (IE), and Arg-156 each bind S-adenosyl-L-methionine.

This sequence belongs to the methyltransferase superfamily. RNA methyltransferase RsmG family.

Its subcellular location is the cytoplasm. Functionally, specifically methylates the N7 position of a guanine in 16S rRNA. In Parasynechococcus marenigrum (strain WH8102), this protein is Ribosomal RNA small subunit methyltransferase G.